A 189-amino-acid chain; its full sequence is Histidinol-phosphate aminotransferase (189 aa).

The protein belongs to the class-II pyridoxal-phosphate-dependent aminotransferase family. Histidinol-phosphate aminotransferase subfamily. Homodimer. Pyridoxal 5'-phosphate is required as a cofactor.

It catalyses the reaction L-histidinol phosphate + 2-oxoglutarate = 3-(imidazol-4-yl)-2-oxopropyl phosphate + L-glutamate. Its pathway is amino-acid biosynthesis; L-histidine biosynthesis; L-histidine from 5-phospho-alpha-D-ribose 1-diphosphate: step 7/9. This chain is Histidinol-phosphate aminotransferase (hisC), found in Thiocapsa roseopersicina.